The primary structure comprises 334 residues: Fructose-1,6-bisphosphatase class 1 (334 aa).

Residues Glu91, Asp113, Leu115, and Asp116 each contribute to the Mg(2+) site. Residues Asp116–Ser119, Asn208, and Lys274 contribute to the substrate site. Glu280 provides a ligand contact to Mg(2+).

The protein belongs to the FBPase class 1 family. As to quaternary structure, homotetramer. Mg(2+) is required as a cofactor.

It localises to the cytoplasm. The catalysed reaction is beta-D-fructose 1,6-bisphosphate + H2O = beta-D-fructose 6-phosphate + phosphate. It functions in the pathway carbohydrate biosynthesis; gluconeogenesis. In Janthinobacterium sp. (strain Marseille) (Minibacterium massiliensis), this protein is Fructose-1,6-bisphosphatase class 1.